Consider the following 67-residue polypeptide: MAVQQNRKSPSKRDMRRSHDALGFSTLSTDSKSGERHRRHHVTKDGFYRGKQVIVHPVESVEVDDEV.

The interval 1 to 44 (MAVQQNRKSPSKRDMRRSHDALGFSTLSTDSKSGERHRRHHVTK) is disordered. Residues 11-20 (SKRDMRRSHD) are compositionally biased toward basic and acidic residues.

This sequence belongs to the bacterial ribosomal protein bL32 family.

This chain is Large ribosomal subunit protein bL32, found in Dichelobacter nodosus (strain VCS1703A).